The sequence spans 406 residues: Argininosuccinate synthase (406 aa).

Residues 11-19 (AYSGGLDTS) and A38 each bind ATP. 2 residues coordinate L-citrulline: Y91 and S96. G121 is an ATP binding site. The L-aspartate site is built by T123, N127, and D128. N127 contributes to the L-citrulline binding site. Residues R131, S181, S190, E266, and Y278 each contribute to the L-citrulline site.

This sequence belongs to the argininosuccinate synthase family. Type 1 subfamily. As to quaternary structure, homotetramer.

It localises to the cytoplasm. It carries out the reaction L-citrulline + L-aspartate + ATP = 2-(N(omega)-L-arginino)succinate + AMP + diphosphate + H(+). It participates in amino-acid biosynthesis; L-arginine biosynthesis; L-arginine from L-ornithine and carbamoyl phosphate: step 2/3. This chain is Argininosuccinate synthase, found in Campylobacter curvus (strain 525.92).